Consider the following 2161-residue polypeptide: SH3 and multiple ankyrin repeat domains protein 1 (2161 aa).

Residues 1-53 (MTHSPATSEDEERHSASECPEGGSESDSSPDGPGRGPRGTRGQGSGAPGSLAS) are disordered. Low complexity predominate over residues 17–32 (SECPEGGSESDSSPDG). The span at 33-47 (PGRGPRGTRGQGSGA) shows a compositional bias: gly residues. Tyr-186 carries the post-translational modification Phosphotyrosine. ANK repeat units follow at residues 212 to 245 (SGET…FRAR), 246 to 278 (DGMT…YKDR), 279 to 312 (RGLT…IADE), 313 to 345 (NGWQ…AQNA), 346 to 378 (SGNT…VKNN), and 379 to 395 (NGQT…NFEL). Disordered regions lie at residues 412–433 (ESPK…VPPA) and 455–546 (GAAS…SRGR). The span at 455–479 (GAASSGAPGPTSGSQGQSQPSAPTT) shows a compositional bias: low complexity. Positions 527–542 (PAGGTGGSGGPGGSLG) are enriched in gly residues. The residue at position 540 (Ser-540) is a Phosphoserine. An Omega-N-methylarginine modification is found at Arg-544. Residues 554 to 613 (VPGRSFMAVKSYQAQAEGEISLSKGEKIKVLSIGEGGFWEGQVKGRVGWFPSDCLEEVAN) form the SH3 domain. The PDZ domain maps to 663–757 (TVLLQKKDSE…TLMVKVVMVT (95 aa)). Phosphoserine occurs at positions 671 and 791. Residues 832–886 (TISASESPGPGGLASLGKHRPKGFFATESSFDPHHRAQPSYERPSFLPPGPGLML) are disordered. Residue Ser-890 is modified to Phosphoserine. Disordered stretches follow at residues 909–1229 (SRSL…LDFT), 1241–1289 (RREG…KSID), 1353–1720 (LGLA…GVAS), 1734–1785 (GQAF…PTSP), 1827–1860 (LPTA…QPQA), 1892–1983 (PWAR…TRHL), and 1996–2023 (RRAP…LPIL). A compositionally biased stretch (pro residues) spans 920–939 (IPPPPTTSPPEPPYSTPPVP). At Arg-950 the chain carries Omega-N-methylarginine. Residues 996–1020 (AHHHPPHHHHHHAPPPQPHHHHAHP) are compositionally biased toward basic residues. Omega-N-methylarginine occurs at positions 1051, 1090, and 1101. Pro residues predominate over residues 1127-1144 (PPAPSPTSPASPQPPPAV). Over residues 1164–1181 (STSSSGRSSQGSSTEAEP) the composition is skewed to low complexity. Residues 1199–1220 (SPAPAMSPVPPSPSPVPTPASP) show a composition bias toward pro residues. The segment covering 1241–1252 (RREGGWQNEARR) has biased composition (basic and acidic residues). Arg-1253 is subject to Asymmetric dimethylarginine. Residue Ser-1287 is modified to Phosphoserine. Over residues 1359 to 1368 (ARERALKESS) the composition is skewed to basic and acidic residues. Pro residues predominate over residues 1374–1391 (PQPPPRPPSPRYEAPPPT). Arg-1423 is subject to Omega-N-methylarginine. At Ser-1436 the chain carries Phosphoserine. 2 stretches are compositionally biased toward pro residues: residues 1517–1532 (GVPP…PSPT) and 1583–1609 (PLTP…PPPA). Residues 1618–1636 (DSTASSLTSYDSEVATLTQ) are compositionally biased toward polar residues. Over residues 1644-1670 (DPHPPGPPAPAAPAPAAPQPGPDPPPG) the composition is skewed to pro residues. Residues 1678-1688 (VDSRSSSDHPL) are compositionally biased toward basic and acidic residues. Low complexity predominate over residues 1692–1702 (SSASTLSSLSA). 2 stretches are compositionally biased toward gly residues: residues 1703–1718 (EGGG…GAGV) and 1764–1774 (ASGGLRPGPSG). Positions 1775-1785 (GLRDPVTPTSP) are enriched in low complexity. Residues 1844–1855 (PGPPPPPLPGPL) show a composition bias toward pro residues. Arg-1895 is subject to Omega-N-methylarginine. 3 stretches are compositionally biased toward low complexity: residues 1917-1940 (SSLQ…VSSL), 1954-1980 (TGTG…STST), and 1996-2006 (RRAPSPSLLPA). Omega-N-methylarginine is present on residues Arg-2016, Arg-2036, and Arg-2074. Residues 2098–2161 (WTKFDVADWL…DRALKFFLER (64 aa)) enclose the SAM domain.

The protein belongs to the SHANK family. May homomultimerize via its SAM domain. Interacts with the C-terminus of SSTR2 via the PDZ domain. Interacts with IGSF9, SHARPIN, SPTAN1, HOMER1 and DLGAP1/GKAP isoforms 1 and 2. Part of a complex with DLG4/PSD-95 and DLGAP1/GKAP. Interacts with BAIAP2. Interacts with HOMER1 and HOMER3. As to expression, expressed in brain particularly in the amygdala, hippocampus, substantia nigra and thalamus. Isoform 2 seems to be expressed ubiquitously.

The protein resides in the cytoplasm. The protein localises to the postsynaptic density. It is found in the synapse. Its function is as follows. Seems to be an adapter protein in the postsynaptic density (PSD) of excitatory synapses that interconnects receptors of the postsynaptic membrane including NMDA-type and metabotropic glutamate receptors via complexes with GKAP/PSD-95 and Homer, respectively, and the actin-based cytoskeleton. Plays a role in the structural and functional organization of the dendritic spine and synaptic junction. The sequence is that of SH3 and multiple ankyrin repeat domains protein 1 (SHANK1) from Homo sapiens (Human).